Here is a 221-residue protein sequence, read N- to C-terminus: Ethylene-inducing xylanase 4 (221 aa).

The signal sequence occupies residues 1-19; sequence MVSFSTLLTACTAITGALG. The 191-residue stretch at 28–218 folds into the GH11 domain; it reads NVTPNAQGTH…SAGRASVVVE (191 aa). A glycan (N-linked (GlcNAc...) asparagine) is linked at Asn96. Glu114 serves as the catalytic Nucleophile. The Proton donor role is filled by Glu205.

It belongs to the glycosyl hydrolase 11 (cellulase G) family.

The catalysed reaction is Endohydrolysis of (1-&gt;4)-beta-D-xylosidic linkages in xylans.. The protein operates within glycan degradation; xylan degradation. In terms of biological role, endo-1,4-beta-xylanase involved in the hydrolysis of xylan, a major structural heterogeneous polysaccharide found in plant biomass representing the second most abundant polysaccharide in the biosphere, after cellulose. May act as an elicitor of plant defense responses in certain plants but does not exhibit any cell death when transiently expressed in N.benthamiana. The sequence is that of Ethylene-inducing xylanase 4 from Verticillium dahliae (strain VdLs.17 / ATCC MYA-4575 / FGSC 10137) (Verticillium wilt).